The chain runs to 135 residues: Large ribosomal subunit protein mL41 (135 aa).

The transit peptide at M1 to R13 directs the protein to the mitochondrion.

It belongs to the mitochondrion-specific ribosomal protein mL41 family. As to quaternary structure, component of the mitochondrial ribosome large subunit (39S) which comprises a 16S rRNA and about 50 distinct proteins. Interacts with BCL2.

The protein localises to the mitochondrion. Functionally, component of the mitochondrial ribosome large subunit. Also involved in apoptosis and cell cycle. Enhances p53/TP53 stability, thereby contributing to p53/TP53-induced apoptosis in response to growth-inhibitory condition. Enhances p53/TP53 translocation to the mitochondria. Has the ability to arrest the cell cycle at the G1 phase, possibly by stabilizing the CDKN1A and CDKN1B (p27Kip1) proteins. The protein is Large ribosomal subunit protein mL41 (Mrpl41) of Mus musculus (Mouse).